Reading from the N-terminus, the 635-residue chain is Isethionate TRAP transporter permease protein DctMQ (635 aa).

The next 16 membrane-spanning stretches (helical) occupy residues 38–58, 75–95, 117–137, 154–174, 192–212, 217–237, 266–286, 299–319, 350–370, 379–399, 431–451, 453–473, 481–501, 526–546, 572–592, and 609–629; these read KPFL…QTLY, TEEM…PVAI, ISWI…LWQS, LQLP…LMAV, TVIG…ADYI, VLFG…IGLG, FPIM…AGGL, GALP…FAAI, AIVA…PFVV, IGKL…ALMA, WALM…MTPT, AAAL…RELS, VVEA…ATIF, IAIL…MEAL, IIMV…VNLF, and VLPL…VPAI.

The protein in the N-terminal section; belongs to the TRAP transporter small permease family. This sequence in the C-terminal section; belongs to the TRAP transporter large permease family. In terms of assembly, the complex comprises the periplasmic solute receptor protein DctP, and the fused transmembrane protein DctMQ.

It is found in the cell inner membrane. It functions in the pathway organosulfur degradation; alkanesulfonate degradation. Functionally, part of the tripartite ATP-independent periplasmic (TRAP) transport system DctPQM involved in the uptake of isethionate (2-hydroxyethanesulfonate), which is then catabolized by enzymes encoded by adjacent genes in the locus. Thereby is involved in an anaerobic respiration pathway that converts the sulfonate isethionate to ammonia, acetate and sulfide. This chain is Isethionate TRAP transporter permease protein DctMQ, found in Oleidesulfovibrio alaskensis (strain ATCC BAA-1058 / DSM 17464 / G20) (Desulfovibrio alaskensis).